A 329-amino-acid polypeptide reads, in one-letter code: Homeobox protein Nkx-3.2 (329 aa).

Positions G107–P188 are disordered. The span at S110–P124 shows a compositional bias: gly residues. Residues E138–G160 are compositionally biased toward basic and acidic residues. A DNA-binding region (homeobox) is located at residues K202–Q261.

Belongs to the NK-3 homeobox family. In terms of tissue distribution, first expressed in developing facial cartilage in early tailbud embryos, with expression localized to the basihyobranchial, palatoquadrate and possibly Meckel's cartilages. Shortly after, a second area of expression is seen in the musculature of the anterior gut. During late embryogenesis, gut expression extends into hindgut tissues. In adults, expressed at a high level in the kidney, pancreas, spleen and stomach and at a slightly lower level in the intestine, skeletal muscle and tongue. Adult heart, liver and lung show little or no expression.

The protein resides in the nucleus. The protein is Homeobox protein Nkx-3.2 (nkx3-2) of Xenopus laevis (African clawed frog).